A 257-amino-acid chain; its full sequence is Ditrans,polycis-undecaprenyl-diphosphate synthase ((2E,6E)-farnesyl-diphosphate specific) (257 aa).

Residue Asp-23 is part of the active site. Residue Asp-23 participates in Mg(2+) binding. Substrate-binding positions include 24–27 (GNGR), Trp-28, Arg-36, His-40, and 68–70 (SSE). The active-site Proton acceptor is the Asn-71. Residues Trp-72, Arg-74, Arg-191, and 197–199 (RIS) contribute to the substrate site. Residue Glu-210 coordinates Mg(2+).

Belongs to the UPP synthase family. In terms of assembly, homodimer. Mg(2+) serves as cofactor.

The catalysed reaction is 8 isopentenyl diphosphate + (2E,6E)-farnesyl diphosphate = di-trans,octa-cis-undecaprenyl diphosphate + 8 diphosphate. Catalyzes the sequential condensation of isopentenyl diphosphate (IPP) with (2E,6E)-farnesyl diphosphate (E,E-FPP) to yield (2Z,6Z,10Z,14Z,18Z,22Z,26Z,30Z,34E,38E)-undecaprenyl diphosphate (di-trans,octa-cis-UPP). UPP is the precursor of glycosyl carrier lipid in the biosynthesis of bacterial cell wall polysaccharide components such as peptidoglycan and lipopolysaccharide. The polypeptide is Ditrans,polycis-undecaprenyl-diphosphate synthase ((2E,6E)-farnesyl-diphosphate specific) (Xanthomonas axonopodis pv. citri (strain 306)).